The primary structure comprises 232 residues: Large ribosomal subunit protein uL1 (232 aa).

The protein belongs to the universal ribosomal protein uL1 family. As to quaternary structure, part of the 50S ribosomal subunit.

Binds directly to 23S rRNA. The L1 stalk is quite mobile in the ribosome, and is involved in E site tRNA release. In terms of biological role, protein L1 is also a translational repressor protein, it controls the translation of the L11 operon by binding to its mRNA. This chain is Large ribosomal subunit protein uL1, found in Xylella fastidiosa (strain M12).